A 243-amino-acid polypeptide reads, in one-letter code: uncharacterized protein (243 aa).

A helical transmembrane segment spans residues 55 to 75 (IILIILLTIFMVISTLVIAFV).

It localises to the membrane. This is an uncharacterized protein from Rickettsia prowazekii (strain Madrid E).